We begin with the raw amino-acid sequence, 367 residues long: Alanine racemase (367 aa).

The Proton acceptor; specific for D-alanine role is filled by Lys40. Lys40 carries the N6-(pyridoxal phosphate)lysine modification. Arg136 contacts substrate. Residue Tyr263 is the Proton acceptor; specific for L-alanine of the active site. Met310 serves as a coordination point for substrate.

This sequence belongs to the alanine racemase family. The cofactor is pyridoxal 5'-phosphate.

The enzyme catalyses L-alanine = D-alanine. Its pathway is amino-acid biosynthesis; D-alanine biosynthesis; D-alanine from L-alanine: step 1/1. Functionally, catalyzes the interconversion of L-alanine and D-alanine. May also act on other amino acids. In Streptococcus pneumoniae (strain Hungary19A-6), this protein is Alanine racemase (alr).